We begin with the raw amino-acid sequence, 630 residues long: SHC-transforming protein 4 (630 aa).

Residues 1–185 form a CH2 region; the sequence is MRERGQDSLA…RQDRHFLQHL (185 aa). Disordered stretches follow at residues 39-80 and 118-150; these read TSLD…QESP and KLQE…QQDL. Low complexity predominate over residues 125 to 142; the sequence is PGSSGPSSPETSLSRSGT. The 184-residue stretch at 186–369 folds into the PID domain; that stretch reads LGMGMNYCVR…VHIDSHAEER (184 aa). Positions 370–525 are CH1; the sequence is EDHEYYNEIP…HIKQQLWSEE (156 aa). Residue Tyr424 is modified to Phosphotyrosine. 2 stretches are compositionally biased toward polar residues: residues 471–486 and 502–513; these read LQST…SAQP and PGATAQPASSHS. Residues 471-514 are disordered; that stretch reads LQSTPGSAGNQRSAQPLGSPWHCGKAPETVQPGATAQPASSHSL. Residues 526–617 enclose the SH2 domain; that stretch reads CYHGKLSRKA…GSEVSLKQPV (92 aa).

As to quaternary structure, interacts (via PID domain) with phosphorylated MUSK (via NPXY motif); undergoes tyrosine phosphorylation downstream of activated MUSK. Interacts with GRB2; the interaction is dependent of Tyr-424 phosphorylation and increased by EGF. Phosphorylated; the phosphorylation is enhanced by EGF. Phosphorylation at Tyr-424 is required for the interaction with GRB2. Only expressed in melanomas. Weakly expressed in normal melanocytes and benign nevi. Highly expressed at the transition from radial growth phase to vertical growth phase and metastatic melanomas, when tumor cells acquire migratory competence and invasive potential.

It localises to the postsynaptic cell membrane. In terms of biological role, activates both Ras-dependent and Ras-independent migratory pathways in melanomas. Contributes to the early phases of agrin-induced tyrosine phosphorylation of CHRNB1. The protein is SHC-transforming protein 4 (SHC4) of Homo sapiens (Human).